Consider the following 398-residue polypeptide: Succinate--CoA ligase [ADP-forming] subunit beta (398 aa).

Positions 9–254 constitute an ATP-grasp domain; it reads KRLLHEYGAP…ISEEDPKEIE (246 aa). ATP-binding positions include Lys46, 53–55, Glu109, Ala112, and Glu117; that span reads GRG. Asn209 and Asp223 together coordinate Mg(2+). Substrate-binding positions include Asn274 and 331-333; that span reads GIM.

It belongs to the succinate/malate CoA ligase beta subunit family. Heterotetramer of two alpha and two beta subunits. Requires Mg(2+) as cofactor.

It catalyses the reaction succinate + ATP + CoA = succinyl-CoA + ADP + phosphate. The enzyme catalyses GTP + succinate + CoA = succinyl-CoA + GDP + phosphate. The protein operates within carbohydrate metabolism; tricarboxylic acid cycle; succinate from succinyl-CoA (ligase route): step 1/1. Its function is as follows. Succinyl-CoA synthetase functions in the citric acid cycle (TCA), coupling the hydrolysis of succinyl-CoA to the synthesis of either ATP or GTP and thus represents the only step of substrate-level phosphorylation in the TCA. The beta subunit provides nucleotide specificity of the enzyme and binds the substrate succinate, while the binding sites for coenzyme A and phosphate are found in the alpha subunit. This chain is Succinate--CoA ligase [ADP-forming] subunit beta, found in Bartonella bacilliformis (strain ATCC 35685 / KC583 / Herrer 020/F12,63).